A 317-amino-acid polypeptide reads, in one-letter code: Protoheme IX farnesyltransferase (317 aa).

7 consecutive transmembrane segments (helical) span residues 33 to 53, 54 to 74, 117 to 137, 154 to 174, 181 to 201, 242 to 262, and 285 to 305; these read VMSL…GEIN, PILG…SGAL, VILG…TIFF, IVIG…CVTG, VILF…LALF, FFTG…SAIF, and MFAY…ADHF.

The protein belongs to the UbiA prenyltransferase family. Protoheme IX farnesyltransferase subfamily.

It localises to the cell inner membrane. The enzyme catalyses heme b + (2E,6E)-farnesyl diphosphate + H2O = Fe(II)-heme o + diphosphate. Its pathway is porphyrin-containing compound metabolism; heme O biosynthesis; heme O from protoheme: step 1/1. Functionally, converts heme B (protoheme IX) to heme O by substitution of the vinyl group on carbon 2 of heme B porphyrin ring with a hydroxyethyl farnesyl side group. The protein is Protoheme IX farnesyltransferase of Agrobacterium fabrum (strain C58 / ATCC 33970) (Agrobacterium tumefaciens (strain C58)).